A 341-amino-acid chain; its full sequence is Glucokinase (341 aa).

An ATP-binding site is contributed by 18 to 23; sequence GDIGGT.

It belongs to the bacterial glucokinase family.

It localises to the cytoplasm. The enzyme catalyses D-glucose + ATP = D-glucose 6-phosphate + ADP + H(+). The sequence is that of Glucokinase from Rhizobium johnstonii (strain DSM 114642 / LMG 32736 / 3841) (Rhizobium leguminosarum bv. viciae).